A 348-amino-acid chain; its full sequence is 4-hydroxy-2-oxovalerate aldolase 3 (348 aa).

One can recognise a Pyruvate carboxyltransferase domain in the interval 8–260; it reads ITVHDMTLRD…ETGVDVWKIQ (253 aa). 16 to 17 serves as a coordination point for substrate; sequence RD. Position 17 (Asp-17) interacts with Mn(2+). His-20 acts as the Proton acceptor in catalysis. Positions 170 and 199 each coordinate substrate. The Mn(2+) site is built by His-199 and His-201. Tyr-290 is a binding site for substrate.

It belongs to the 4-hydroxy-2-oxovalerate aldolase family.

It catalyses the reaction (S)-4-hydroxy-2-oxopentanoate = acetaldehyde + pyruvate. The protein is 4-hydroxy-2-oxovalerate aldolase 3 of Burkholderia lata (strain ATCC 17760 / DSM 23089 / LMG 22485 / NCIMB 9086 / R18194 / 383).